A 137-amino-acid polypeptide reads, in one-letter code: Small ribosomal subunit protein eS6 (137 aa).

The segment covering 114–127 (LPVEEAPAEDAPES) has biased composition (acidic residues). The tract at residues 114-137 (LPVEEAPAEDAPESAEEKSEDKKE) is disordered. Residues 128–137 (AEEKSEDKKE) show a composition bias toward basic and acidic residues.

Belongs to the eukaryotic ribosomal protein eS6 family.

The chain is Small ribosomal subunit protein eS6 from Nitrosopumilus maritimus (strain SCM1).